The sequence spans 552 residues: MQLLYYIYEEPVTIHLGTWISLGDIVIPFGLSLDSLAMTVIVPVGIITLCVLAYAIEYMSHDPNRNRFYIILSIFAVFMTILVVSDNYLMMFIGWEFVGVISYLLISFWSTRITAMKSALSAILLNRMGDTFFVIALGLMINYYHAVDYDTIALVTPYMNTFLLNTLGLLLLLAATAKSAQLGLHAWLLQAMEGPTPVSALLHAATMVCAGVYVLVRSYMILEYTPTMLLIICWLGGLTTLVSGLIAIVTNDIKRVIALSTMSQLSIMVLAIGISAYDLAIYHLYCHAFFKALLFMGAGSVIHSFVAESQDMRKYGGLIEYLPFSYTAILIASLSLMAIPGLTGYYSKDIIIESLYGSYTLSGYILYYIAVGSATLTSIYSLRVLYLTFMGVPNANKASYSHIHESLGMMIPMIVLVIYSIFIGYSRDSVIGHYALSLPANNGFIETEYTLPAYIKLLPLILGLTLSAILVYVYEYAYKINRSAVYDYLNNRIYYEQILNNIVIRNTLRLGGYMNAYIDQGLLKVLGSTGVSRAVTYINVIVIINILYLFFI.

15 helical membrane-spanning segments follow: residues 11 to 31 (PVTIHLGTWISLGDIVIPFGL), 36 to 56 (LAMTVIVPVGIITLCVLAYAI), 68 to 88 (FYIILSIFAVFMTILVVSDNY), 89 to 109 (LMMFIGWEFVGVISYLLISFW), 121 to 141 (SAILLNRMGDTFFVIALGLMI), 152 to 172 (IALVTPYMNTFLLNTLGLLLL), 196 to 216 (TPVSALLHAATMVCAGVYVLV), 229 to 249 (LLIICWLGGLTTLVSGLIAIV), 256 to 274 (VIALSTMSQLSIMVLAIGI), 287 to 307 (HAFFKALLFMGAGSVIHSFVA), 322 to 342 (LPFSYTAILIASLSLMAIPGL), 365 to 386 (ILYYIAVGSATLTSIYSLRVLY), 406 to 426 (SLGMMIPMIVLVIYSIFIGYS), 453 to 473 (AYIKLLPLILGLTLSAILVYV), and 532 to 552 (SRAVTYINVIVIINILYLFFI).

Belongs to the complex I subunit 5 family.

It localises to the mitochondrion inner membrane. The catalysed reaction is a ubiquinone + NADH + 5 H(+)(in) = a ubiquinol + NAD(+) + 4 H(+)(out). Its function is as follows. Core subunit of the mitochondrial membrane respiratory chain NADH dehydrogenase (Complex I) that is believed to belong to the minimal assembly required for catalysis. Complex I functions in the transfer of electrons from NADH to the respiratory chain. The immediate electron acceptor for the enzyme is believed to be ubiquinone. This chain is NADH-ubiquinone oxidoreductase chain 5 (NAD5), found in Candida albicans (strain SC5314 / ATCC MYA-2876) (Yeast).